Consider the following 451-residue polypeptide: Phosphoglucosamine mutase (451 aa).

S101 serves as the catalytic Phosphoserine intermediate. Mg(2+) contacts are provided by S101, D240, D242, and D244. S101 is subject to Phosphoserine.

The protein belongs to the phosphohexose mutase family. The cofactor is Mg(2+). Post-translationally, activated by phosphorylation.

It carries out the reaction alpha-D-glucosamine 1-phosphate = D-glucosamine 6-phosphate. In terms of biological role, catalyzes the conversion of glucosamine-6-phosphate to glucosamine-1-phosphate. The protein is Phosphoglucosamine mutase of Streptococcus pyogenes serotype M12 (strain MGAS2096).